The primary structure comprises 203 residues: Orotate phosphoribosyltransferase (203 aa).

Residues arginine 94, lysine 98, histidine 100, and 120–128 (EDLISTGGS) contribute to the 5-phospho-alpha-D-ribose 1-diphosphate site. Serine 124 contacts orotate.

This sequence belongs to the purine/pyrimidine phosphoribosyltransferase family. PyrE subfamily. As to quaternary structure, homodimer. Requires Mg(2+) as cofactor.

The enzyme catalyses orotidine 5'-phosphate + diphosphate = orotate + 5-phospho-alpha-D-ribose 1-diphosphate. It participates in pyrimidine metabolism; UMP biosynthesis via de novo pathway; UMP from orotate: step 1/2. Catalyzes the transfer of a ribosyl phosphate group from 5-phosphoribose 1-diphosphate to orotate, leading to the formation of orotidine monophosphate (OMP). The protein is Orotate phosphoribosyltransferase of Staphylococcus aureus (strain Mu50 / ATCC 700699).